The chain runs to 178 residues: uncharacterized protein (178 aa).

The protein belongs to the mycobacterial PPE family.

This is an uncharacterized protein from Mycobacterium tuberculosis (strain CDC 1551 / Oshkosh).